The primary structure comprises 356 residues: Protein RecA (356 aa).

71–78 contacts ATP; that stretch reads GPESSGKT.

The protein belongs to the RecA family.

Its subcellular location is the cytoplasm. Its function is as follows. Can catalyze the hydrolysis of ATP in the presence of single-stranded DNA, the ATP-dependent uptake of single-stranded DNA by duplex DNA, and the ATP-dependent hybridization of homologous single-stranded DNAs. It interacts with LexA causing its activation and leading to its autocatalytic cleavage. The polypeptide is Protein RecA (Synechococcus elongatus (strain ATCC 33912 / PCC 7942 / FACHB-805) (Anacystis nidulans R2)).